The primary structure comprises 341 residues: L-threonine 3-dehydrogenase (341 aa).

Residue C38 participates in Zn(2+) binding. Active-site charge relay system residues include T40 and H43. H63, E64, C93, C96, C99, and C107 together coordinate Zn(2+). Residues I175, D195, R200, 262–264, and 286–287 contribute to the NAD(+) site; these read LGI and IY.

The protein belongs to the zinc-containing alcohol dehydrogenase family. In terms of assembly, homotetramer. Zn(2+) serves as cofactor.

It is found in the cytoplasm. The catalysed reaction is L-threonine + NAD(+) = (2S)-2-amino-3-oxobutanoate + NADH + H(+). The protein operates within amino-acid degradation; L-threonine degradation via oxydo-reductase pathway; glycine from L-threonine: step 1/2. Functionally, catalyzes the NAD(+)-dependent oxidation of L-threonine to 2-amino-3-ketobutyrate. The protein is L-threonine 3-dehydrogenase of Serratia proteamaculans (strain 568).